The primary structure comprises 207 residues: Small ribosomal subunit protein uS4 (207 aa).

Residues 31 to 55 (KCKLDSKPGQHGRTSGARTSDYGTQ) are disordered. Positions 42–53 (GRTSGARTSDYG) are enriched in polar residues. In terms of domain architecture, S4 RNA-binding spans 97-160 (SRLDNVVYRM…KKQARIVEAL (64 aa)).

This sequence belongs to the universal ribosomal protein uS4 family. In terms of assembly, part of the 30S ribosomal subunit. Contacts protein S5. The interaction surface between S4 and S5 is involved in control of translational fidelity.

Its function is as follows. One of the primary rRNA binding proteins, it binds directly to 16S rRNA where it nucleates assembly of the body of the 30S subunit. With S5 and S12 plays an important role in translational accuracy. This chain is Small ribosomal subunit protein uS4, found in Burkholderia thailandensis (strain ATCC 700388 / DSM 13276 / CCUG 48851 / CIP 106301 / E264).